We begin with the raw amino-acid sequence, 769 residues long: Glutathione biosynthesis bifunctional protein GshAB (769 aa).

The tract at residues 1–347 (MLDSFKENEA…QLADENENNI (347 aa)) is glutamate--cysteine ligase. Residues 514–768 (KLVLAEHGIR…IGDKILDFLF (255 aa)) enclose the ATP-grasp domain. 541–599 (SLFEDKQIVVKPKSTNYGWGISIFKNKFTLEDYQEALNIAFSYDSSVIIEEFIPGDEFR) is an ATP binding site. Positions 721, 738, and 740 each coordinate Mg(2+). Residues Asp721, Glu738, and Asn740 each contribute to the Mn(2+) site.

This sequence in the N-terminal section; belongs to the glutamate--cysteine ligase type 1 family. Type 2 subfamily. Monomer. Requires Mg(2+) as cofactor. Mn(2+) is required as a cofactor.

It carries out the reaction L-cysteine + L-glutamate + ATP = gamma-L-glutamyl-L-cysteine + ADP + phosphate + H(+). The catalysed reaction is gamma-L-glutamyl-L-cysteine + glycine + ATP = glutathione + ADP + phosphate + H(+). It participates in sulfur metabolism; glutathione biosynthesis; glutathione from L-cysteine and L-glutamate: step 1/2. Its pathway is sulfur metabolism; glutathione biosynthesis; glutathione from L-cysteine and L-glutamate: step 2/2. Synthesizes glutathione from L-glutamate and L-cysteine via gamma-L-glutamyl-L-cysteine. This Listeria innocua serovar 6a (strain ATCC BAA-680 / CLIP 11262) protein is Glutathione biosynthesis bifunctional protein GshAB.